Here is a 594-residue protein sequence, read N- to C-terminus: UvrABC system protein C (594 aa).

Positions 13-99 (NSSGVYQYFD…IKQLKPKYNI (87 aa)) constitute a GIY-YIG domain. In terms of domain architecture, UVR spans 205–240 (DRLIKELELKMERLSSKLRFEEALIYRDRIAKIQKI).

The protein belongs to the UvrC family. In terms of assembly, interacts with UvrB in an incision complex.

Its subcellular location is the cytoplasm. Its function is as follows. The UvrABC repair system catalyzes the recognition and processing of DNA lesions. UvrC both incises the 5' and 3' sides of the lesion. The N-terminal half is responsible for the 3' incision and the C-terminal half is responsible for the 5' incision. The protein is UvrABC system protein C of Helicobacter pylori (strain P12).